The primary structure comprises 570 residues: Periplasmic trehalase (570 aa).

Positions M1–A34 are cleaved as a signal peptide. Substrate-binding positions include R159, W166–D167, N203, R212–Q214, R284–E286, and G317. Residues D319 and E503 each act as proton donor/acceptor in the active site. E518 is a binding site for substrate. The disordered stretch occupies residues K544–Q570. The span at P554–Q570 shows a compositional bias: low complexity.

This sequence belongs to the glycosyl hydrolase 37 family. Monomer.

The protein localises to the periplasm. It catalyses the reaction alpha,alpha-trehalose + H2O = alpha-D-glucose + beta-D-glucose. Functionally, provides the cells with the ability to utilize trehalose at high osmolarity by splitting it into glucose molecules that can subsequently be taken up by the phosphotransferase-mediated uptake system. This chain is Periplasmic trehalase, found in Salmonella paratyphi B (strain ATCC BAA-1250 / SPB7).